The chain runs to 356 residues: Fructose import permease protein FruF (356 aa).

Helical transmembrane passes span 25–45 (IVAF…FLAL), 77–97 (LVIS…VAGA), 113–133 (ILIA…LVSF), 180–200 (FILG…LVGL), 231–251 (ILFL…LFAT), 268–290 (MYAI…SLAG), and 308–328 (LGVN…VICV).

It belongs to the binding-protein-dependent transport system permease family. In terms of assembly, the complex is composed of an ATP-binding protein (FruK), two transmembrane proteins (FruF and FruG) and a solute-binding protein (FruE).

The protein localises to the cell membrane. Part of the high-affinity ABC transporter complex FruEKFG involved in fructose uptake. Can also transport ribose and xylose, with lower affinity. Probably responsible for the translocation of the substrate across the membrane. In Bifidobacterium longum (strain NCC 2705), this protein is Fructose import permease protein FruF.